A 667-amino-acid polypeptide reads, in one-letter code: WD40 repeat-containing protein DDB_G0271002 (667 aa).

2 WD repeats span residues 165–204 (NHGVSTWGIAICPSKPLIAVSSNSHKITIWNLDDENPQET) and 210–249 (KHKHNIPSIDFSPCGNYLVSVSIDKNIRIWDVNKRQLLRI). Low complexity predominate over residues 278–293 (SSNSRDNNNNNSNSNN). Disordered stretches follow at residues 278-301 (SSNSRDNNNNNSNSNNNGGGGIII), 316-345 (LVENNQEVEPMPEEEEEEEEEEVNQVDNDD), and 389-440 (DIIF…ATTT). A compositionally biased stretch (acidic residues) spans 325–345 (PMPEEEEEEEEEEVNQVDNDD). Low complexity predominate over residues 400 to 410 (NQHQQQQQQNQ). The segment covering 411–428 (EIEEEGQEGQEEQEDGTE) has biased composition (acidic residues). A compositionally biased stretch (low complexity) spans 429-440 (NENNQGTIATTT).

The protein is WD40 repeat-containing protein DDB_G0271002 of Dictyostelium discoideum (Social amoeba).